Consider the following 113-residue polypeptide: UPF0122 protein M6_Spy0905 (113 aa).

Belongs to the UPF0122 family.

Its function is as follows. Might take part in the signal recognition particle (SRP) pathway. This is inferred from the conservation of its genetic proximity to ftsY/ffh. May be a regulatory protein. This Streptococcus pyogenes serotype M6 (strain ATCC BAA-946 / MGAS10394) protein is UPF0122 protein M6_Spy0905.